The following is a 445-amino-acid chain: Branched-chain amino acid permease BraB (445 aa).

12 helical membrane-spanning segments follow: residues 11-31 (IIIGFMLFALFFGAGNMIYPP), 45-65 (IGGFLLTGVGLPLLGIIAIAL), 79-99 (PVFGTIFTVVLYLSIGPLFAI), 122-142 (LSLLIFTLIFFGVTYYLALNP), 158-178 (FTIILIIVLKAIFTPMGGLGA), 192-212 (FLEGYKTMDALASIVFGVVVV), 233-253 (AGVIAALGLTFIYVSLAYLGA), 275-295 (YLFGSLGNIVLGAAITVACLT), 311-331 (LIPALSYKIVVTIVTLFSLII), 339-359 (IIAFSVPILSAIYPLAIVIIV), 375-395 (IACLIGTGLFSILDGIKAAGF), and 415-435 (IGWVLPGIVGAVIGYVLTLFI).

Belongs to the branched chain amino acid transporter family.

The protein resides in the cell membrane. In terms of biological role, branched-chain amino acid transport system which is involved in the uptake of isoleucine, valine and probably leucine. Together with BcaP and BrnQ, plays an important role in the activation of CodY, a branched-chain amino acid-responsive transcriptional regulator that controls the expression of several dozen transcription units in B.subtilis. The polypeptide is Branched-chain amino acid permease BraB (Bacillus subtilis (strain 168)).